The chain runs to 228 residues: MTEYLLSAGICMAIVSILLIGMAISNVSKGQYAKRFFFFATSCLVLTLVVVSSLSSSANASQTDNGVNRSGSEHPTVYSATSTKKLHKEPATLIKAIDGDTVKLMYKGQPMTFRLLLVDTPETKHPKKGVEKYGPEASAFTKKMVENAKKIEVEFDKGQRTDKYGRGLAYIYADGKMVNEALVRQGLAKVAYVYKPNNTHEQLLRKSEAQAKKEKLNIWSEDNADSGQ.

An N-terminal signal peptide occupies residues 1-23; that stretch reads MTEYLLSAGICMAIVSILLIGMA. Residues 24–60 constitute a propeptide that is removed on maturation; the sequence is ISNVSKGQYAKRFFFFATSCLVLTLVVVSSLSSSANA. D100 is a binding site for Ca(2+). Residue R114 is part of the active site. Positions 119 and 120 each coordinate Ca(2+). Residues E122 and R166 contribute to the active site.

Belongs to the thermonuclease family. The cofactor is Ca(2+).

The protein resides in the secreted. The catalysed reaction is Endonucleolytic cleavage to nucleoside 3'-phosphates and 3'-phosphooligonucleotide end-products.. Its function is as follows. Enzyme that catalyzes the hydrolysis of both DNA and RNA at the 5' position of the phosphodiester bond. This chain is Thermonuclease (nuc), found in Staphylococcus aureus (strain MSSA476).